The following is a 147-amino-acid chain: Large ribosomal subunit protein bL9 (147 aa).

The protein belongs to the bacterial ribosomal protein bL9 family.

In terms of biological role, binds to the 23S rRNA. In Geotalea daltonii (strain DSM 22248 / JCM 15807 / FRC-32) (Geobacter daltonii), this protein is Large ribosomal subunit protein bL9.